Reading from the N-terminus, the 134-residue chain is Small ribosomal subunit protein uS9c (134 aa).

Belongs to the universal ribosomal protein uS9 family.

The protein resides in the plastid. It is found in the chloroplast. The sequence is that of Small ribosomal subunit protein uS9c (rps9) from Euglena gracilis.